Reading from the N-terminus, the 515-residue chain is Maturase K (515 aa).

This sequence belongs to the intron maturase 2 family. MatK subfamily.

It localises to the plastid. It is found in the chloroplast. In terms of biological role, usually encoded in the trnK tRNA gene intron. Probably assists in splicing its own and other chloroplast group II introns. The chain is Maturase K from Pinus yunnanensis (Yunnan pine).